Here is a 525-residue protein sequence, read N- to C-terminus: MVQPADIDVPETPARPVLVVDFGAQYAQLIARRVREARVFSEVIPHTASIEEIRARQPVALVLSGGPASVYADGAPKLDPALLDLGVPVLGICYGFQAMAQALGGIVAHTGTREYGRTELKVLGGKLHSDLPEVQPVWMSHGDAVTAAPDGFDVVASSAGAPVAAFEAFDRRLAGVQYHPEVMHTPHGQQVLSRFLHDFAGLGAQWTPANIANALIEQVRTQIGDGHAICGLSGGVDSAVAAALVQRAIGDRLTCVFVDHGLLRAGERAQVQRDFVAATGANLVTVDAAETFLEALSGVSAPEGKRKIIGRQFIRAFEGAVRDVLDGKTAEFLVQGTLYPDVVESGGGSGTANIKSHHNVGGLPDDLKFTLVEPLRLLFKDEVRAVGRELGLPEEIVARQPFPGPGLGIRIVGEVTAKRVDTLRHADSIVREELTAAGLDNQIWQCPVVLLADVRSVGVQGDGRTYGHPIVLRPVSSEDAMTADWTRVPYEVLERISTRITNEVAEVNRVVLDITSKPPATIEWE.

Residues 16–205 (PVLVVDFGAQ…LHDFAGLGAQ (190 aa)) enclose the Glutamine amidotransferase type-1 domain. The active-site Nucleophile is the Cys93. Catalysis depends on residues His179 and Glu181. Positions 206 to 399 (WTPANIANAL…LGLPEEIVAR (194 aa)) constitute a GMPS ATP-PPase domain. 233–239 (SGGVDSA) is a binding site for ATP.

As to quaternary structure, homodimer.

The catalysed reaction is XMP + L-glutamine + ATP + H2O = GMP + L-glutamate + AMP + diphosphate + 2 H(+). The protein operates within purine metabolism; GMP biosynthesis; GMP from XMP (L-Gln route): step 1/1. Its function is as follows. Catalyzes the synthesis of GMP from XMP. In Mycobacterium tuberculosis (strain CDC 1551 / Oshkosh), this protein is GMP synthase [glutamine-hydrolyzing] (guaA).